A 162-amino-acid polypeptide reads, in one-letter code: NADH-quinone oxidoreductase subunit I 2 (162 aa).

4Fe-4S ferredoxin-type domains are found at residues 53–83 (LRRY…IESE) and 93–122 (TRYD…ETRI). 8 residues coordinate [4Fe-4S] cluster: C63, C66, C69, C73, C102, C105, C108, and C112.

It belongs to the complex I 23 kDa subunit family. NDH-1 is composed of 14 different subunits. Subunits NuoA, H, J, K, L, M, N constitute the membrane sector of the complex. Requires [4Fe-4S] cluster as cofactor.

Its subcellular location is the cell inner membrane. It catalyses the reaction a quinone + NADH + 5 H(+)(in) = a quinol + NAD(+) + 4 H(+)(out). Its function is as follows. NDH-1 shuttles electrons from NADH, via FMN and iron-sulfur (Fe-S) centers, to quinones in the respiratory chain. The immediate electron acceptor for the enzyme in this species is believed to be ubiquinone. Couples the redox reaction to proton translocation (for every two electrons transferred, four hydrogen ions are translocated across the cytoplasmic membrane), and thus conserves the redox energy in a proton gradient. The protein is NADH-quinone oxidoreductase subunit I 2 of Nitrosospira multiformis (strain ATCC 25196 / NCIMB 11849 / C 71).